Reading from the N-terminus, the 178-residue chain is Orotate phosphoribosyltransferase (178 aa).

Residues Arg92, Lys93, Lys96, and Glu118–Ser126 contribute to the 5-phospho-alpha-D-ribose 1-diphosphate site. Residues Thr122 and Arg150 each contribute to the orotate site.

It belongs to the purine/pyrimidine phosphoribosyltransferase family. PyrE subfamily. As to quaternary structure, homodimer. Requires Mg(2+) as cofactor.

The enzyme catalyses orotidine 5'-phosphate + diphosphate = orotate + 5-phospho-alpha-D-ribose 1-diphosphate. The protein operates within pyrimidine metabolism; UMP biosynthesis via de novo pathway; UMP from orotate: step 1/2. In terms of biological role, catalyzes the transfer of a ribosyl phosphate group from 5-phosphoribose 1-diphosphate to orotate, leading to the formation of orotidine monophosphate (OMP). This chain is Orotate phosphoribosyltransferase, found in Archaeoglobus fulgidus (strain ATCC 49558 / DSM 4304 / JCM 9628 / NBRC 100126 / VC-16).